The following is a 415-amino-acid chain: Protein maelstrom homolog (415 aa).

Positions 4–73 (KKAARNAYFF…DPDSTSTYND (70 aa)) form a DNA-binding region, HMG box. The disordered stretch occupies residues 367–399 (SSDPKYSTDKSERSSFEPRGVKPYQGPSGGGRG). The span at 372–386 (YSTDKSERSSFEPRG) shows a compositional bias: basic and acidic residues.

This sequence belongs to the maelstrom family.

The protein localises to the cytoplasm. It localises to the nucleus. In terms of biological role, plays a central role during spermatogenesis by repressing transposable elements and preventing their mobilization, which is essential for the germline integrity. Acts via the piRNA metabolic process, which mediates the repression of transposable elements during meiosis by forming complexes composed of piRNAs and Piwi proteins and governs the methylation and subsequent repression of transposons. Its association with piP-bodies suggests a participation in the secondary piRNAs metabolic process. Required for the localization of germ-cell factors to the meiotic nuage. This chain is Protein maelstrom homolog (mael), found in Xenopus tropicalis (Western clawed frog).